We begin with the raw amino-acid sequence, 468 residues long: 3-isopropylmalate dehydratase large subunit (468 aa).

[4Fe-4S] cluster is bound by residues cysteine 349, cysteine 409, and cysteine 412.

It belongs to the aconitase/IPM isomerase family. LeuC type 1 subfamily. As to quaternary structure, heterodimer of LeuC and LeuD. [4Fe-4S] cluster is required as a cofactor.

The enzyme catalyses (2R,3S)-3-isopropylmalate = (2S)-2-isopropylmalate. It participates in amino-acid biosynthesis; L-leucine biosynthesis; L-leucine from 3-methyl-2-oxobutanoate: step 2/4. Its function is as follows. Catalyzes the isomerization between 2-isopropylmalate and 3-isopropylmalate, via the formation of 2-isopropylmaleate. This Roseobacter denitrificans (strain ATCC 33942 / OCh 114) (Erythrobacter sp. (strain OCh 114)) protein is 3-isopropylmalate dehydratase large subunit.